We begin with the raw amino-acid sequence, 2212 residues long: MALAVAAPSEWRGILPYNTSKDSPTVHSMKVATDVKNEQGEFGFWDTCVHTVVREHCQRSPDSPAVNAWDGSFTYAELDSLSDAIASVLILFGVKPESIIPIYMHKSRWTTVAILGVLKSGGAFTLLDPSHPRSRLEEICKEIQARFILTSEELSKQCSEMSSVLVVEHLSRACLLSPGQAGQTPSRPENAAYIAFTSGSTGKPKGIVIEHRSYCSGARSHLKVFGIDSTSRVLQFASYAFDVSIMETLSTLMAGGCLCVMSESERSDPNLFVESYKNFRISHCFMTPSFARTVQWTECCNPPPTLIVGGELMRPSDTRAYKAMGICCMNAYGPAECSVNVSVQSRVEDGVDPRNIGYTTGATAWIISPENPEQLMPPGTVGELLVEGPIVGRGYLNDPSATRQAFIDTPGWLRRHRKGTSYQHRVYRTGDLASQDSISGALLLHGRKDAQVKIRGQRVELPDIEHHLQQTLPDGDAEVIVEKVTFSDDGAEKLIAFVLIPPSSTGFITDNMGDRLFLAPQSQIMEQFAISKKHLQTNLPSYMVPDIFIPISTIPQTVSGKTDRKALRTRAAALSRRDVQCYLLSPTGDKRPPSTLKETTIRSLYSKVLNLPIDLIGMDDTFLRLGGDSLQAIRLVAAARTAGLVLHAKDILSSQSTLAEQSQRAGLIQTSDHTGEASTPFALLPVATRHDIVDLAQKQCRVSSKLIEDIYPCTALQEGMFMTSLRHPGMYTGQITFDIPDRMELPRLRAAWLSVVSKNAALRTRIIETHEGLMQAVIVDDFAWEEETDEMLPSGRWEVLEITKIGVPLVRFRYRPRHRQLIMTIHHSIWDGWSLRLVHEQLQRAYIGRDPLPSTSYRSFIQYGQDLPGADEFWASELAGVNAPIFPTLPSGNYRPCVNASHRHGVRKLVSTGRGEHTAATYIHLAWSLLVAHYTDADETVYGVTVNGRSADVPGIENIVGPTIATVPLRIRVNQEDTVKMALDQVQDSLARMIPYEQAGLQRISRCSRDASEACRFQTLLIIEAPADRDVACEKNEAKNFSIIRGTTQTGMDYTAFSPYAMMLIFRTSADKSAITLDITYDAQVIGCVEVERMAHQFEHVLRHIYKRATGRIGDISFLGPRDIEQVQQWNSYMPPADNRFLQELIFARCSRRPQASAIISWDGSWTYRELWAHSSFFARQLQRYGVTRGTPVAVCLDRSRWSIAVILAVLLAGGTCVLIDLLSPRQRVRDILQIVGAGIMVNSHATAPVTSGLCPTVIDVSLLVAQNDDSQTECPFNLDTWERGVGTPEDLAFIMFTSGSTGHPKGIEMPHRTLSTSIYHHSAGMKVKSSSRVLHFSSYAFDVSIYEIFTTLAAGGTICVPSEFDRMNNLSGFIQDTQVNWAFLTPSTARSLDPADVPLLTTLVLGGEAVTHESVEAWAKGRSLINGYGPAEATICGVGNIPEAGWKSGVIGQIVGGLGWVTVPSDPNRLAAVGAVGELLLEGPFLARGYLNLPEVTRAAFIDPPSWRTQIPAPSPYPFLYRTGDLVQYQPDGSIQYIGRKDSRIKLRGQLVDLSAVEASLMRVYPAAIQVVADVLVSENTTRLIAMMKLGPPVTETHDDPLFEAPDLAFNEAAASVQARLRAIVPPYMVPSMFIPLRHIPRTLTGKTDRRQLRDKLLSLSQSDLQRYIMSSSAKTPMSDDNERRLQEIWAEVLQLPCEAIGREDSFLLLGGESLATMKMVALARRVGFVFAVADVLNNTSLSTLAQFRHLITEDDIPSPSPSLSLSTIESQSLQKILRPLQNGGLIQGGNDIAAIHPVTAAQAFLVQRYPWSHFQFDLSGAISPSKLQTACTTLMARFTILRTVFVEHAGHLLQLVLREVRKCVHEITTDEPLDDFCNSLCQQQQGVCVVNSTALPTLFTLVSNRQLNRHRLLLRLAHAQYDLTTIPLIVQALADEYNGTLRAGFSSDFSYYLNHHMRQTNDDRAHTFWNQYLSGSFMTSTDQTADTTTPQERIFHVTGSCTVTPASHPLGITTATAVKAAVCLVLASRTGCTDIVVGQTVDARCSSADGTLDQIVGPCTNYIPYRLSVCCSKTALEYLCSAQAQHTTSLRYSSLDLDQIVAKCTSWPSSTQFGYIVQHQNTGADLALSLAGCTTSSPMTSYGHVFPQGEVWIGSTPYSTGLKIDVIAPSAVLSQEDAQAMAGEVGAALENLLACGDRPLSDLIGNTFAT.

An adenylation 1 region spans residues 74-473 (TYAELDSLSD…IEHHLQQTLP (400 aa)). The Carrier 1 domain maps to 592–669 (PPSTLKETTI…EQSQRAGLIQ (78 aa)). At S629 the chain carries O-(pantetheine 4'-phosphoryl)serine. The interval 708–973 (EDIYPCTALQ…IATVPLRIRV (266 aa)) is condensation 1. The interval 1167-1564 (TYRELWAHSS…LSAVEASLMR (398 aa)) is adenylation 2. Positions 1678–1757 (PMSDDNERRL…QFRHLITEDD (80 aa)) constitute a Carrier 2 domain. S1715 bears the O-(pantetheine 4'-phosphoryl)serine mark. The segment at 1815-2070 (HFQFDLSGAI…CTNYIPYRLS (256 aa)) is condensation 2.

The protein belongs to the NRP synthetase family.

The catalysed reaction is L-proline + L-tryptophan + 2 ATP = brevianamide F + 2 AMP + 2 diphosphate + 2 H(+). The protein operates within mycotoxin biosynthesis. Functionally, nonribosomal peptide synthetase; part of the gene cluster that mediates the biosynthesis of fumitremorgins, indole alkaloids that carry not only intriguing chemical structures, but also interesting biological and pharmacological activities. The biosynthesis of fumitremorgin-type alkaloids begins by condensation of the two amino acids L-tryptophan and L-proline to brevianamide F, catalyzed by the non-ribosomal peptide synthetase ftmPS/ftmA. Brevianamide F is then prenylated by the prenyltransferase ftmPT1/ftmB in the presence of dimethylallyl diphosphate, resulting in the formation of tryprostatin B. The three cytochrome P450 monooxygenases, ftmP450-1/ftmC, ftmP450-2/ftmE and ftmP450-3/FtmG, are responsible for the conversion of tryprostatin B to 6-hydroxytryprostatin B, tryprostatin A to fumitremorgin C and fumitremorgin C to 12,13-dihydroxyfumitremorgin C, respectively. The putative methyltransferase ftmMT/ftmD is expected for the conversion of 6-hydroxytryprostatin B to tryprostatin A. FtmPT2/FtmH catalyzes the prenylation of 12,13-dihydroxyfumitre-morgin C in the presence of dimethylallyl diphosphate, resulting in the formation of fumitremorgin B. Fumitremorgin B is further converted to verruculogen by ftmOx1/ftmF via the insertion of an endoperoxide bond between the two prenyl moieties. Finally, verruculogen is further converted to fumitremorgin A by the verruculogen prenyltransferase ftmPT3. The polypeptide is Nonribosomal peptide synthetase ftmPS (ftmPS) (Neosartorya fischeri (strain ATCC 1020 / DSM 3700 / CBS 544.65 / FGSC A1164 / JCM 1740 / NRRL 181 / WB 181) (Aspergillus fischerianus)).